The chain runs to 579 residues: Fatty-acid amide hydrolase 1 (579 aa).

Residues 9-29 traverse the membrane as a helical segment; the sequence is TLSGVSGVCLACSLLSAAVVL. Topologically, residues 30-403 are cytoplasmic; sequence RWTGRQKARG…GDFVDPCLGD (374 aa). K142 (charge relay system) is an active-site residue. Substrate-binding positions include M191, S217, and 238–241; that span reads IGGS. The Charge relay system role is filled by S217. The active-site Acyl-ester intermediate is S241. S241 carries the phosphoserine modification. An intramembrane segment occupies 404-433; the sequence is LILILRLPSWFKRLLSLLLKPLFPRLAAFL. Topologically, residues 434 to 579 are cytoplasmic; the sequence is NSMRPRSAEK…QLMTPQKQPS (146 aa).

Belongs to the amidase family. In terms of assembly, homodimer. In terms of tissue distribution, found in neuronal cells throughout the CNS. Expressed in liver and brain, and to a lesser extent in spleen, lung, kidney and testes.

It localises to the endoplasmic reticulum membrane. The protein resides in the golgi apparatus membrane. It catalyses the reaction N-(5Z,8Z,11Z,14Z-eicosatetraenoyl)-ethanolamine + H2O = ethanolamine + (5Z,8Z,11Z,14Z)-eicosatetraenoate. The catalysed reaction is (9Z)-octadecenamide + H2O = (9Z)-octadecenoate + NH4(+). It carries out the reaction 2-(5Z,8Z,11Z,14Z-eicosatetraenoyl)-glycerol + H2O = glycerol + (5Z,8Z,11Z,14Z)-eicosatetraenoate + H(+). The enzyme catalyses (9Z,12Z,15Z)-octadecatrienamide + H2O = (9Z,12Z,15Z)-octadecatrienoate + NH4(+). It catalyses the reaction (5Z,8Z,11Z,14Z)-eicosatetraenamide + H2O = (5Z,8Z,11Z,14Z)-eicosatetraenoate + NH4(+). The catalysed reaction is (6Z)-octadecenamide + H2O = (6Z)-octadecenoate + NH4(+). It carries out the reaction (15Z)-tetracosenamide + H2O = (15Z)-tetracosenoate + NH4(+). The enzyme catalyses (8Z,11Z,14Z)-eicosatrienamide + H2O = (8Z,11Z,14Z)-eicosatrienoate + NH4(+). It catalyses the reaction (11Z,14Z,17Z)-eicosatrienamide + H2O = (11Z,14Z,17Z)-eicosatrienoate + NH4(+). The catalysed reaction is (11Z,14Z)-eicosadienamide + H2O = (11Z,14Z)-eicosadienoate + NH4(+). It carries out the reaction (9Z,12Z)-octadecadienamide + H2O = (9Z,12Z)-octadecadienoate + NH4(+). The enzyme catalyses tetradecamide + H2O = tetradecanoate + NH4(+). It catalyses the reaction N-(9Z-octadecenoyl) ethanolamine + H2O = ethanolamine + (9Z)-octadecenoate. The catalysed reaction is N-(9Z-octadecenoyl)-taurine + H2O = taurine + (9Z)-octadecenoate. It carries out the reaction 1-O-methyl-(5Z,8Z,11Z,14Z)-eicosatetraenoate + H2O = methanol + (5Z,8Z,11Z,14Z)-eicosatetraenoate + H(+). The enzyme catalyses (11Z)-eicosenamide + H2O = (11Z)-eicosenoate + NH4(+). It catalyses the reaction N-(9Z-hexadecenoyl) ethanolamine + H2O = (9Z)-hexadecenoate + ethanolamine. The catalysed reaction is N-octadecanoyl ethanolamine + H2O = octadecanoate + ethanolamine. It carries out the reaction N-docosanoyl-ethanolamine + H2O = docosanoate + ethanolamine. The enzyme catalyses N-tetracosanoyl-taurine + H2O = tetracosanoate + taurine. It catalyses the reaction N-(15Z-tetracosenoyl)-ethanolamine + H2O = (15Z)-tetracosenoate + ethanolamine. The catalysed reaction is N-docosanoyl-taurine + H2O = docosanoate + taurine. It carries out the reaction N-(15Z-tetracosenoyl)-taurine + H2O = (15Z)-tetracosenoate + taurine. The enzyme catalyses N-tricosanoyl-taurine + H2O = tricosanoate + taurine. It catalyses the reaction (9Z)-octadecenoate + glycine = N-(9Z-octadecenoyl)glycine + H2O. The catalysed reaction is N-(5Z,8Z,11Z,14Z)-eicosatetraenoyl-glycine + H2O = (5Z,8Z,11Z,14Z)-eicosatetraenoate + glycine. It carries out the reaction N-(5Z,8Z,11Z,14Z-eicosatetraenoyl)-L-serine + H2O = (5Z,8Z,11Z,14Z)-eicosatetraenoate + L-serine. With respect to regulation, inhibited by trifluoromethyl ketone. Catalyzes the hydrolysis of endogenous amidated lipids like the sleep-inducing lipid oleamide ((9Z)-octadecenamide), the endocannabinoid anandamide (N-(5Z,8Z,11Z,14Z-eicosatetraenoyl)-ethanolamine), as well as other fatty amides, to their corresponding fatty acids, thereby regulating the signaling functions of these molecules. Hydrolyzes polyunsaturated substrate anandamide preferentially as compared to monounsaturated substrates. It can also catalyze the hydrolysis of the endocannabinoid 2-arachidonoylglycerol (2-(5Z,8Z,11Z,14Z-eicosatetraenoyl)-glycerol). FAAH cooperates with PM20D1 in the hydrolysis of amino acid-conjugated fatty acids such as N-fatty acyl glycine and N-fatty acyl-L-serine, thereby acting as a physiological regulator of specific subsets of intracellular, but not of extracellular, N-fatty acyl amino acids. The protein is Fatty-acid amide hydrolase 1 (Faah) of Rattus norvegicus (Rat).